Reading from the N-terminus, the 181-residue chain is Large ribosomal subunit protein uL5 (181 aa).

The protein belongs to the universal ribosomal protein uL5 family. As to quaternary structure, part of the 50S ribosomal subunit; part of the 5S rRNA/L5/L18/L25 subcomplex. Contacts the 5S rRNA and the P site tRNA. Forms a bridge to the 30S subunit in the 70S ribosome.

This is one of the proteins that bind and probably mediate the attachment of the 5S RNA into the large ribosomal subunit, where it forms part of the central protuberance. In the 70S ribosome it contacts protein S13 of the 30S subunit (bridge B1b), connecting the 2 subunits; this bridge is implicated in subunit movement. Contacts the P site tRNA; the 5S rRNA and some of its associated proteins might help stabilize positioning of ribosome-bound tRNAs. This Helicobacter pylori (strain HPAG1) protein is Large ribosomal subunit protein uL5.